The following is a 379-amino-acid chain: Glucose-1-phosphate adenylyltransferase (379 aa).

Alpha-D-glucose 1-phosphate contacts are provided by residues G164, 179–180 (EK), and S190.

The protein belongs to the bacterial/plant glucose-1-phosphate adenylyltransferase family. Homotetramer.

The enzyme catalyses alpha-D-glucose 1-phosphate + ATP + H(+) = ADP-alpha-D-glucose + diphosphate. Its pathway is glycan biosynthesis; glycogen biosynthesis. Its function is as follows. Involved in the biosynthesis of ADP-glucose, a building block required for the elongation reactions to produce glycogen. Catalyzes the reaction between ATP and alpha-D-glucose 1-phosphate (G1P) to produce pyrophosphate and ADP-Glc. In Streptococcus uberis (strain ATCC BAA-854 / 0140J), this protein is Glucose-1-phosphate adenylyltransferase.